The chain runs to 129 residues: Profilin-4 (129 aa).

The protein belongs to the profilin family.

The protein localises to the cytoplasm. Involved in male fertility. Required for manchette development and acrosome biogenesis during spermiogenesis. Binds in vitro to phospholipids, including phosphatidylinositol 3-phosphate (PtdIns(3)P), phosphatidylinositol 4,5-bisphosphate (PtdIns(4,5)P2), phosphatidylinositol 4-phosphate (PtdIns(4)P) and phosphatidic acid (PA). Contrary to other profilin family members, does not bind to actin in vitro. This Bos taurus (Bovine) protein is Profilin-4 (PFN4).